A 100-amino-acid chain; its full sequence is Large ribosomal subunit protein uL23 (100 aa).

The protein belongs to the universal ribosomal protein uL23 family. Part of the 50S ribosomal subunit. Contacts protein L29, and trigger factor when it is bound to the ribosome.

One of the early assembly proteins it binds 23S rRNA. One of the proteins that surrounds the polypeptide exit tunnel on the outside of the ribosome. Forms the main docking site for trigger factor binding to the ribosome. This Thermosynechococcus vestitus (strain NIES-2133 / IAM M-273 / BP-1) protein is Large ribosomal subunit protein uL23.